We begin with the raw amino-acid sequence, 54 residues long: Ovomucoid (54 aa).

The 51-residue stretch at 4 to 54 (VDCSEYPKPACTMEHRPLCGSDNQTYDNKCNFCNAVVESNGTLTLSHFGKC) folds into the Kazal-like domain. Intrachain disulfides connect cysteine 6–cysteine 36, cysteine 14–cysteine 33, and cysteine 22–cysteine 54. Asparagine 43 carries N-linked (GlcNAc...) asparagine glycosylation.

It localises to the secreted. The protein is Ovomucoid of Guttera pucherani (Eastern crested guineafowl).